The following is a 324-amino-acid chain: ATP synthase mitochondrial F1 complex assembly factor 1 (324 aa).

The N-terminal 54 residues, 1–54 (MAAVVSAAGGACPAVLQVAGLYRGLCAVRSRALGLGFVSPAQLRVFPVRRGSGL), are a transit peptide targeting the mitochondrion.

It belongs to the ATP11 family. As to quaternary structure, interacts with ATP5F1B; involved in the assembly of the F1 component of the mitochondrial ATP synthase (ATPase). As to expression, widely expressed but with low level.

It is found in the mitochondrion inner membrane. In terms of biological role, has a complex stabilizing activity in the assembly of the mitochondrial F1-F0 complex. In Mus musculus (Mouse), this protein is ATP synthase mitochondrial F1 complex assembly factor 1.